We begin with the raw amino-acid sequence, 1133 residues long: MKARAPPPPGKPAAQNVHSEQKLPHDATLGSQQSLVHLKEALHNSTLDITVVLPSGLEKQSVVSGSRAVMDLLVELCLQNHLNPSHHVLEIWSSETQQPLSFKPNTLIGSLNAHTVFLKEKVPEEKGKPGLTKAPEKSVRLVVNYLRTQKAVMRVSPEVPLQNILPVICAKCEVSPDHVVLLRDNIAGEELELSKSLNELGIKELYAWDNRREMLRKSSLGNDETDKEKKKFLGFFKVNKRSNSKAEHLGLSGADSDEDPSKSASGGDLNGCVTTPNSPSLHSRSLTLGPSLSLGNISGMSMKSDMKKRRAPPPPSPGLLGQDKVSEKASLSSQADLQKKKRRAPAPPPPQPPPPSPVVPNRKEDKEENRKSTVGMEENYETDTSSLTSSVNGVSNHSLQEAIIPDSGVDDIPVTFIGEVSDEPFDSGLFFSGSNNAAALNQGGIASQRSHLPPYQTEQSQPFIRTNRKEPDPSLPSQDYRKRNQPILANTSENENPVGIDPRVTSFVSKPSTDDPKAKDKDKMCGSGPSEKTQTGHRVNSLPVNPRVGEDENSNSALPPWSHHGQASGGSYGLKYGLTTYKIVPPKPEMRCYDRDVSLSTGAIKIDELGNLMSPHMNGSRTISKPSAVAETEAPPIGKVKEFWRRNSMEKYLNGPAECTVKKAPSTTITATSEKPQRDETKAGFTLTTPEQQPASQEYGAPPEEDRSRPHSAVSCPVKVPAPNPTDITFLKPQRRTSSQYVASAIAKKMGPPKVHADVVRPHKKTAEQGHEEAKLARPPPAWKDSAVPNLCSEAGQCEHGTNQGSVRLPSNPGGQLPADHPKVEVNSTYGKSATHNSPAAVHRNSYFLPGRSSQRDRVSVGQSCGFHEKQTISNQKMNSTSNPSQALDKAHPAPLLLTEARDSGRILVNGSAQTPGNCEPPHSQKESTLTSYIILQTEEKPSPLSADGQNSDDALPSSIFGPKKKFKPVVQRPLPKDISLHSALMEAIHTSGGRDKLRKTAEQASEGRPKKPSYVEAESERSALLAAIRGHSGTLSLRKVSSLASEELQSFRDAALMAPGVDKPQQEDRGLPPPPALPPPSTPASQVPSASIPVSRFSIGTLSNPVNARQALMDAIRSGTGAARLRKVPLLV.

Over residues 1-11 (MKARAPPPPGK) the composition is skewed to pro residues. Positions 1–25 (MKARAPPPPGKPAAQNVHSEQKLPH) are disordered. Phosphoserine occurs at positions 31, 34, 196, 219, 256, and 278. Disordered stretches follow at residues 246-393 (AEHL…SVNG) and 442-568 (QGGI…GQAS). The span at 272–301 (CVTTPNSPSLHSRSLTLGPSLSLGNISGMS) shows a compositional bias: polar residues. Residues 307 to 312 (KKRRAP) carry the KKRRAP 1 motif. Phosphoserine is present on residues Ser-330 and Ser-333. Residues 340-345 (KKRRAP) carry the KKRRAP 2 motif. Residues 345 to 358 (PAPPPPQPPPPSPV) are compositionally biased toward pro residues. The residue at position 356 (Ser-356) is a Phosphoserine. Positions 361–371 (NRKEDKEENRK) are enriched in basic and acidic residues. 2 stretches are compositionally biased toward polar residues: residues 382–393 (TDTSSLTSSVNG) and 442–464 (QGGI…QPFI). Ser-447 is modified (phosphoserine). Basic and acidic residues predominate over residues 512-524 (STDDPKAKDKDKM). At Ser-614 the chain carries Phosphoserine. The segment at 664 to 720 (APSTTITATSEKPQRDETKAGFTLTTPEQQPASQEYGAPPEEDRSRPHSAVSCPVKV) is disordered. Composition is skewed to polar residues over residues 665 to 674 (PSTTITATSE) and 686 to 696 (TLTTPEQQPAS). Ser-924 carries the phosphoserine modification. 2 disordered regions span residues 942–961 (PSPL…SSIF) and 990–1018 (HTSG…YVEA). 2 consecutive WH2 domains span residues 981–1001 (LHSA…LRKT) and 1021–1041 (ERSA…LRKV). Over residues 993 to 1010 (GGRDKLRKTAEQASEGRP) the composition is skewed to basic and acidic residues. The disordered stretch occupies residues 1063–1091 (DKPQQEDRGLPPPPALPPPSTPASQVPSA). Residues 1072-1083 (LPPPPALPPPST) are compositionally biased toward pro residues. Ser-1099 carries the phosphoserine modification. A WH2 3 domain is found at 1109–1129 (ARQALMDAIRSGTGAARLRKV).

In terms of assembly, identified in a complex composed of ACTA1, COBL, GSN AND TMSB4X. Identified in a complex composed of COBL, PACSIN1 and WASL. Interacts with PACSIN1, PACSIN2 and PACSIN3. Interacts (via WH2 domains) with actin monomers. Interacts with both PACSIN1 and DBNL. Detected in brain (at protein level).

The protein localises to the cell membrane. Its subcellular location is the cytoplasm. The protein resides in the cytoskeleton. It is found in the cell projection. It localises to the ruffle. The protein localises to the cytosol. Its function is as follows. Plays an important role in the reorganization of the actin cytoskeleton. Binds to and sequesters actin monomers (G actin). Nucleates actin polymerization by assembling three actin monomers in cross-filament orientation and thereby promotes growth of actin filaments at the barbed end. Can also mediate actin depolymerization at barbed ends and severing of actin filaments. Promotes formation of cell ruffles. Regulates dendrite branching in Purkinje cells. Regulates neuron morphogenesis and increases branching of axons and dendrites. This is Protein cordon-bleu (Cobl) from Rattus norvegicus (Rat).